Here is a 356-residue protein sequence, read N- to C-terminus: DNA polymerase IV (356 aa).

The region spanning 6-187 (IIHIDMDYFF…LDIGDFPGVG (182 aa)) is the UmuC domain. Mg(2+) is bound by residues Asp-10 and Asp-105. Residue Glu-106 is part of the active site.

This sequence belongs to the DNA polymerase type-Y family. In terms of assembly, monomer. It depends on Mg(2+) as a cofactor.

The protein localises to the cytoplasm. The catalysed reaction is DNA(n) + a 2'-deoxyribonucleoside 5'-triphosphate = DNA(n+1) + diphosphate. Functionally, poorly processive, error-prone DNA polymerase involved in untargeted mutagenesis. Copies undamaged DNA at stalled replication forks, which arise in vivo from mismatched or misaligned primer ends. These misaligned primers can be extended by PolIV. Exhibits no 3'-5' exonuclease (proofreading) activity. May be involved in translesional synthesis, in conjunction with the beta clamp from PolIII. This is DNA polymerase IV from Staphylococcus aureus (strain MRSA252).